A 204-amino-acid polypeptide reads, in one-letter code: FMN-dependent NADH:quinone oxidoreductase (204 aa).

FMN-binding positions include Ser-10 and 15–17; that span reads SLS.

It belongs to the azoreductase type 1 family. Homodimer. FMN serves as cofactor.

The enzyme catalyses 2 a quinone + NADH + H(+) = 2 a 1,4-benzosemiquinone + NAD(+). It carries out the reaction N,N-dimethyl-1,4-phenylenediamine + anthranilate + 2 NAD(+) = 2-(4-dimethylaminophenyl)diazenylbenzoate + 2 NADH + 2 H(+). Its function is as follows. Quinone reductase that provides resistance to thiol-specific stress caused by electrophilic quinones. Functionally, also exhibits azoreductase activity. Catalyzes the reductive cleavage of the azo bond in aromatic azo compounds to the corresponding amines. This Rhizobium johnstonii (strain DSM 114642 / LMG 32736 / 3841) (Rhizobium leguminosarum bv. viciae) protein is FMN-dependent NADH:quinone oxidoreductase.